Reading from the N-terminus, the 279-residue chain is Protein K1 (279 aa).

An N-terminal signal peptide occupies residues 1–18 (MFLYVVCSLAVCFRGLLS). Over 19-220 (LSLQSSPNLC…TYLYIQEHLL (202 aa)) the chain is Extracellular. The helical transmembrane segment at 221 to 241 (VFMTLVALIGTMCGILGTIIF) threads the bilayer. Topologically, residues 242-279 (AHCQKQRDSNKTVPQQLQDYYSLHDLCTEDYTQPVDWY) are cytoplasmic.

Homooligomer.

It localises to the host membrane. Its function is as follows. Promotes host cell survival pathways and may contribute to pathogenesis by preventing infected cells from undergoing apoptosis. Acts in host B-cells by mimicking the activated B-cell receptor complex. The cytoplasmic tail of K1 can induce the phosphorylation of a number of different kinases, leading to the activation of survival signaling pathways. This chain is Protein K1 (K1), found in Human herpesvirus 8 type P (isolate GK18) (HHV-8).